We begin with the raw amino-acid sequence, 609 residues long: Zinc metalloproteinase-disintegrin-like (609 aa).

Positions 1–20 are cleaved as a signal peptide; sequence MIQVLLVTICLAALPYQGSS. A propeptide spanning residues 21-189 is cleaved from the precursor; it reads IILESGNVND…KKASQLVVTA (169 aa). The Peptidase M12B domain occupies 198–393; the sequence is RFVELVLVVD…QNPECIVNEP (196 aa). Positions 201 and 285 each coordinate Ca(2+). 3 cysteine pairs are disulfide-bonded: C308-C388, C348-C372, and C350-C355. H333 contacts Zn(2+). E334 is a catalytic residue. H337 and H343 together coordinate Zn(2+). An N-linked (GlcNAc...) asparagine glycan is attached at N371. C388, N391, V403, N406, L408, E410, E413, and D416 together coordinate Ca(2+). A Disintegrin domain is found at 401–487; it reads PPVCGNELLE…ECPADVFHKN (87 aa). 14 disulfides stabilise this stretch: C404–C433, C415–C428, C417–C423, C427–C450, C441–C447, C446–C472, C459–C479, C466–C498, C491–C503, C510–C560, C525–C571, C538–C548, C555–C597, and C591–C602. A D/ECD-tripeptide motif is present at residues 465-467; sequence ECD. Ca(2+) is bound by residues D467, P468, E470, D482, and V483.

Belongs to the venom metalloproteinase (M12B) family. P-III subfamily. P-IIIa sub-subfamily. Monomer. It depends on Zn(2+) as a cofactor. As to expression, expressed by the venom gland.

The protein resides in the secreted. Its function is as follows. This protein is a zinc metalloprotease from snake venom that possesses hemorrhagic activity. The protein is Zinc metalloproteinase-disintegrin-like of Crotalus durissus durissus (Central American rattlesnake).